The sequence spans 308 residues: Aspartate carbamoyltransferase catalytic subunit (308 aa).

Carbamoyl phosphate-binding residues include R59 and T60. K87 lines the L-aspartate pocket. Carbamoyl phosphate-binding residues include R109, H137, and Q140. L-aspartate-binding residues include R170 and R224. Carbamoyl phosphate is bound by residues G265 and P266.

The protein belongs to the aspartate/ornithine carbamoyltransferase superfamily. ATCase family. In terms of assembly, heterododecamer (2C3:3R2) of six catalytic PyrB chains organized as two trimers (C3), and six regulatory PyrI chains organized as three dimers (R2).

It catalyses the reaction carbamoyl phosphate + L-aspartate = N-carbamoyl-L-aspartate + phosphate + H(+). It participates in pyrimidine metabolism; UMP biosynthesis via de novo pathway; (S)-dihydroorotate from bicarbonate: step 2/3. Functionally, catalyzes the condensation of carbamoyl phosphate and aspartate to form carbamoyl aspartate and inorganic phosphate, the committed step in the de novo pyrimidine nucleotide biosynthesis pathway. The polypeptide is Aspartate carbamoyltransferase catalytic subunit (Flavobacterium psychrophilum (strain ATCC 49511 / DSM 21280 / CIP 103535 / JIP02/86)).